We begin with the raw amino-acid sequence, 470 residues long: SHUGOSHIN 2 (470 aa).

Positions 72–113 form a coiled coil; it reads IQKLRINLRSVQEKNLQLAQANSQMLAELNTNRDRLKDLQHE. Basic and acidic residues-rich tracts occupy residues 131 to 143 and 150 to 162; these read VLPR…KDKV and GDCK…DIKH. 2 disordered regions span residues 131-176 and 358-470; these read VLPR…IKSS and ESAG…RRKC. The segment covering 163–172 has biased composition (basic residues); that stretch reads KDTKRKRTTR. Over residues 370-381 the composition is skewed to basic and acidic residues; it reads SESRHETKEITR. Residues 382 to 392 show a composition bias toward basic residues; it reads KRSFSTRRQST. 3 stretches are compositionally biased toward basic and acidic residues: residues 396–406, 423–438, and 449–462; these read SQTDEAIKEIA, TESK…EGMT, and HAAE…EVSL.

Belongs to the shugoshin family.

Its function is as follows. Dispensable for both meiotic and mitotic cell cycle progression. Required with SGO1 for full protection of centromeric cohesion during anaphase I. Required to prevent precocious release of pericentromeric cohesins during meiosis. Acts redundantly to SGO1. This is SHUGOSHIN 2 from Arabidopsis thaliana (Mouse-ear cress).